The sequence spans 175 residues: Peptide deformylase (175 aa).

Residues cysteine 98 and histidine 140 each contribute to the Fe cation site. Glutamate 141 is an active-site residue. Histidine 144 contributes to the Fe cation binding site.

It belongs to the polypeptide deformylase family. Fe(2+) is required as a cofactor.

The enzyme catalyses N-terminal N-formyl-L-methionyl-[peptide] + H2O = N-terminal L-methionyl-[peptide] + formate. Functionally, removes the formyl group from the N-terminal Met of newly synthesized proteins. Requires at least a dipeptide for an efficient rate of reaction. N-terminal L-methionine is a prerequisite for activity but the enzyme has broad specificity at other positions. This is Peptide deformylase from Nitrobacter hamburgensis (strain DSM 10229 / NCIMB 13809 / X14).